Consider the following 392-residue polypeptide: Formate-dependent phosphoribosylglycinamide formyltransferase (392 aa).

Residues 20-21 (EL) and glutamate 80 each bind N(1)-(5-phospho-beta-D-ribosyl)glycinamide. ATP is bound by residues arginine 112, lysine 153, 158-163 (SSGKGQ), 193-196 (EGFI), and glutamate 201. The ATP-grasp domain occupies 117-306 (RLAAETLALP…EFALHVRAIL (190 aa)). Residues glutamate 265 and glutamate 277 each contribute to the Mg(2+) site. N(1)-(5-phospho-beta-D-ribosyl)glycinamide is bound by residues aspartate 284, lysine 354, and 361-362 (RR).

Belongs to the PurK/PurT family. Homodimer.

The enzyme catalyses N(1)-(5-phospho-beta-D-ribosyl)glycinamide + formate + ATP = N(2)-formyl-N(1)-(5-phospho-beta-D-ribosyl)glycinamide + ADP + phosphate + H(+). It functions in the pathway purine metabolism; IMP biosynthesis via de novo pathway; N(2)-formyl-N(1)-(5-phospho-D-ribosyl)glycinamide from N(1)-(5-phospho-D-ribosyl)glycinamide (formate route): step 1/1. In terms of biological role, involved in the de novo purine biosynthesis. Catalyzes the transfer of formate to 5-phospho-ribosyl-glycinamide (GAR), producing 5-phospho-ribosyl-N-formylglycinamide (FGAR). Formate is provided by PurU via hydrolysis of 10-formyl-tetrahydrofolate. The chain is Formate-dependent phosphoribosylglycinamide formyltransferase from Shewanella amazonensis (strain ATCC BAA-1098 / SB2B).